Consider the following 211-residue polypeptide: Interleukin-6 (211 aa).

The N-terminal stretch at M1–P29 is a signal peptide. An intrachain disulfide couples C71 to C77. S80 bears the Phosphoserine mark. A disulfide bridge connects residues C100 and C110.

It belongs to the IL-6 superfamily. As to quaternary structure, component of a hexamer of two molecules each of IL6, IL6R and IL6ST; first binds to IL6R to associate with the signaling subunit IL6ST. Interacts with IL6R (via the N-terminal ectodomain); this interaction may be affected by IL6R-binding with SORL1, hence decreasing IL6 cis signaling. Interacts with SORL1 (via the N-terminal ectodomain); this interaction leads to IL6 internalization and lysosomal degradation. May form a trimeric complex with the soluble SORL1 ectodomain and soluble IL6R receptor; this interaction might stabilize circulating IL6, hence promoting IL6 trans signaling.

It is found in the secreted. Functionally, cytokine with a wide variety of biological functions in immunity, tissue regeneration, and metabolism. Binds to IL6R, then the complex associates to the signaling subunit IL6ST/gp130 to trigger the intracellular IL6-signaling pathway. The interaction with the membrane-bound IL6R and IL6ST stimulates 'classic signaling', whereas the binding of IL6 and soluble IL6R to IL6ST stimulates 'trans-signaling'. Alternatively, 'cluster signaling' occurs when membrane-bound IL6:IL6R complexes on transmitter cells activate IL6ST receptors on neighboring receiver cells. Its function is as follows. IL6 is a potent inducer of the acute phase response. Rapid production of IL6 contributes to host defense during infection and tissue injury, but excessive IL6 synthesis is involved in disease pathology. In the innate immune response, is synthesized by myeloid cells, such as macrophages and dendritic cells, upon recognition of pathogens through toll-like receptors (TLRs) at the site of infection or tissue injury. In the adaptive immune response, is required for the differentiation of B cells into immunoglobulin-secreting cells. Plays a major role in the differentiation of CD4(+) T cell subsets. Essential factor for the development of T follicular helper (Tfh) cells that are required for the induction of germinal-center formation. Required to drive naive CD4(+) T cells to the Th17 lineage. Also required for proliferation of myeloma cells and the survival of plasmablast cells. In terms of biological role, acts as an essential factor in bone homeostasis and on vessels directly or indirectly by induction of VEGF, resulting in increased angiogenesis activity and vascular permeability. Induces, through 'trans-signaling' and synergistically with IL1B and TNF, the production of VEGF. Involved in metabolic controls, is discharged into the bloodstream after muscle contraction increasing lipolysis and improving insulin resistance. 'Trans-signaling' in central nervous system also regulates energy and glucose homeostasis. Mediates, through GLP-1, crosstalk between insulin-sensitive tissues, intestinal L cells and pancreatic islets to adapt to changes in insulin demand. Also acts as a myokine. Plays a protective role during liver injury, being required for maintenance of tissue regeneration. Also has a pivotal role in iron metabolism by regulating HAMP/hepcidin expression upon inflammation or bacterial infection. Through activation of IL6ST-YAP-NOTCH pathway, induces inflammation-induced epithelial regeneration. The chain is Interleukin-6 (IL6) from Camelus bactrianus (Bactrian camel).